The primary structure comprises 599 residues: Microtubule-associated protein 70-2 (599 aa).

The interval 1 to 30 (MADGGGGEEGSASALRGSARRRGAVQPAGL) is disordered. The stretch at 43–349 (DPVKVELNRL…ARSEAQLKEK (307 aa)) forms a coiled coil. The segment at 227-460 (ILDRLHRQKV…HLLNRSTDAV (234 aa)) is required for targeting to microtubules. 2 disordered regions span residues 357-453 (LEDG…PHLL) and 557-599 (AMRL…RNLQ). Residues 404–420 (RRSPSFNSRSSLSTSSS) are compositionally biased toward low complexity. Residues 533 to 570 (LTKAMEVEAKKMRREVAAMEKEVAAMRLDKDQENKAKR) adopt a coiled-coil conformation. Residues 557–568 (AMRLDKDQENKA) are compositionally biased toward basic and acidic residues.

The protein belongs to the MAP70 family.

Its subcellular location is the cytoplasm. It is found in the cytoskeleton. Functionally, plant-specific protein that interact with microtubules. In Oryza sativa subsp. japonica (Rice), this protein is Microtubule-associated protein 70-2 (MAP70.2).